Consider the following 309-residue polypeptide: MVDLCNDLLSIKEGQKKEFTLHSGNKVSFIKAKIPHKRIQDLTFVNQKTNVRDQESLTEESLADIIKTIKLQQFFPVIGREIDGRIEILDGTRRRASAIYAGADLEVLYSKEYISTLDARKLANDIQTAKEHSIRELGIGLNFLKVSGMSYKDIAKKENLSRAKVTRAFQAASVPQEIISLFPIASELNFNDYKILFNYYKGLEKANESLSSTLPILKEEIKDLDTNLPPDIYKKEILNIIKKSKNRKQNPSLKVDSLFISKDKRTYIKRKENKTNRTLIFTLSKINKTVQREIDEAIRDIISRHLSSS.

Residues 152–171 (KDIAKKENLSRAKVTRAFQA) constitute a DNA-binding region (H-T-H motif).

Belongs to the ParB family.

Functionally, transcription activator for the invasion antigens IpaB, IpaC and IpaD. VirB is itself regulated by VirF. This is Virulence regulon transcriptional activator VirB (virB) from Shigella flexneri.